The chain runs to 130 residues: Glycine cleavage system H protein (130 aa).

The region spanning 23–105 (IGIIGITDFA…YGKGWMIKVE (83 aa)) is the Lipoyl-binding domain. Lysine 64 is modified (N6-lipoyllysine).

The protein belongs to the GcvH family. The glycine cleavage system is composed of four proteins: P, T, L and H. The cofactor is (R)-lipoate.

In terms of biological role, the glycine cleavage system catalyzes the degradation of glycine. The H protein shuttles the methylamine group of glycine from the P protein to the T protein. This is Glycine cleavage system H protein from Carboxydothermus hydrogenoformans (strain ATCC BAA-161 / DSM 6008 / Z-2901).